The chain runs to 59 residues: Protein translocase subunit SecE (59 aa).

Residues 30–50 (ITVITTVIFFAIFFALIDSGI) form a helical membrane-spanning segment.

It belongs to the SecE/SEC61-gamma family. As to quaternary structure, component of the Sec protein translocase complex. Heterotrimer consisting of SecY, SecE and SecG subunits. The heterotrimers can form oligomers, although 1 heterotrimer is thought to be able to translocate proteins. Interacts with the ribosome. Interacts with SecDF, and other proteins may be involved. Interacts with SecA.

The protein localises to the cell membrane. Essential subunit of the Sec protein translocation channel SecYEG. Clamps together the 2 halves of SecY. May contact the channel plug during translocation. The sequence is that of Protein translocase subunit SecE from Bacillus licheniformis.